We begin with the raw amino-acid sequence, 468 residues long: 23S rRNA (uracil(1939)-C(5))-methyltransferase RlmD (468 aa).

The region spanning 12 to 70 (SKQLSPKLSLNVTQLDHLGAGMAQHQGKVVFIPQALPGERVSVQLTDQKKSFAKAKLIK) is the TRAM domain. 4 residues coordinate [4Fe-4S] cluster: cysteine 83, cysteine 89, cysteine 92, and cysteine 174. Residues glutamine 296, phenylalanine 325, asparagine 330, glutamate 351, aspartate 378, and aspartate 398 each coordinate S-adenosyl-L-methionine. Catalysis depends on cysteine 424, which acts as the Nucleophile.

The protein belongs to the class I-like SAM-binding methyltransferase superfamily. RNA M5U methyltransferase family. RlmD subfamily.

The catalysed reaction is uridine(1939) in 23S rRNA + S-adenosyl-L-methionine = 5-methyluridine(1939) in 23S rRNA + S-adenosyl-L-homocysteine + H(+). Functionally, catalyzes the formation of 5-methyl-uridine at position 1939 (m5U1939) in 23S rRNA. The protein is 23S rRNA (uracil(1939)-C(5))-methyltransferase RlmD of Shewanella denitrificans (strain OS217 / ATCC BAA-1090 / DSM 15013).